We begin with the raw amino-acid sequence, 204 residues long: Methylthioribulose-1-phosphate dehydratase (204 aa).

Residues histidine 94 and histidine 96 each coordinate Zn(2+).

This sequence belongs to the aldolase class II family. MtnB subfamily. Zn(2+) is required as a cofactor.

The catalysed reaction is 5-(methylsulfanyl)-D-ribulose 1-phosphate = 5-methylsulfanyl-2,3-dioxopentyl phosphate + H2O. It participates in amino-acid biosynthesis; L-methionine biosynthesis via salvage pathway; L-methionine from S-methyl-5-thio-alpha-D-ribose 1-phosphate: step 2/6. Functionally, catalyzes the dehydration of methylthioribulose-1-phosphate (MTRu-1-P) into 2,3-diketo-5-methylthiopentyl-1-phosphate (DK-MTP-1-P). This Pseudomonas syringae pv. tomato (strain ATCC BAA-871 / DC3000) protein is Methylthioribulose-1-phosphate dehydratase.